Reading from the N-terminus, the 648-residue chain is Biosynthetic arginine decarboxylase (648 aa).

Residue lysine 109 is modified to N6-(pyridoxal phosphate)lysine. Residue 291 to 301 (LDVGGGLGVDY) participates in substrate binding.

The protein belongs to the Orn/Lys/Arg decarboxylase class-II family. SpeA subfamily. Mg(2+) serves as cofactor. Requires pyridoxal 5'-phosphate as cofactor.

It catalyses the reaction L-arginine + H(+) = agmatine + CO2. Its function is as follows. Catalyzes the biosynthesis of agmatine from arginine. This is Biosynthetic arginine decarboxylase from Prochlorococcus marinus (strain MIT 9313).